Consider the following 355-residue polypeptide: UDP-N-acetylglucosamine--N-acetylmuramyl-(pentapeptide) pyrophosphoryl-undecaprenol N-acetylglucosamine transferase (355 aa).

The UDP-N-acetyl-alpha-D-glucosamine site is built by arginine 166, serine 196, and glutamine 290.

The protein belongs to the glycosyltransferase 28 family. MurG subfamily.

The protein localises to the cell membrane. The enzyme catalyses Mur2Ac(oyl-L-Ala-gamma-D-Glu-L-Lys-D-Ala-D-Ala)-di-trans,octa-cis-undecaprenyl diphosphate + UDP-N-acetyl-alpha-D-glucosamine = beta-D-GlcNAc-(1-&gt;4)-Mur2Ac(oyl-L-Ala-gamma-D-Glu-L-Lys-D-Ala-D-Ala)-di-trans,octa-cis-undecaprenyl diphosphate + UDP + H(+). It functions in the pathway cell wall biogenesis; peptidoglycan biosynthesis. Functionally, cell wall formation. Catalyzes the transfer of a GlcNAc subunit on undecaprenyl-pyrophosphoryl-MurNAc-pentapeptide (lipid intermediate I) to form undecaprenyl-pyrophosphoryl-MurNAc-(pentapeptide)GlcNAc (lipid intermediate II). This Staphylococcus haemolyticus (strain JCSC1435) protein is UDP-N-acetylglucosamine--N-acetylmuramyl-(pentapeptide) pyrophosphoryl-undecaprenol N-acetylglucosamine transferase.